A 400-amino-acid chain; its full sequence is tRNA(Ile)-lysidine synthase (400 aa).

20 to 25 is an ATP binding site; sequence SGGLDS.

It belongs to the tRNA(Ile)-lysidine synthase family.

The protein localises to the cytoplasm. The catalysed reaction is cytidine(34) in tRNA(Ile2) + L-lysine + ATP = lysidine(34) in tRNA(Ile2) + AMP + diphosphate + H(+). Its function is as follows. Ligates lysine onto the cytidine present at position 34 of the AUA codon-specific tRNA(Ile) that contains the anticodon CAU, in an ATP-dependent manner. Cytidine is converted to lysidine, thus changing the amino acid specificity of the tRNA from methionine to isoleucine. This chain is tRNA(Ile)-lysidine synthase, found in Wigglesworthia glossinidia brevipalpis.